Consider the following 480-residue polypeptide: Probable tRNA N6-adenosine threonylcarbamoyltransferase, mitochondrial (480 aa).

The N-terminal 86 residues, 1–86, are a transit peptide targeting the mitochondrion; that stretch reads MVRLFLTLSP…NPNFDDNLVV (86 aa). Residues H194 and H198 each contribute to the a divalent metal cation site. Residues 217–221, D250, G265, E269, 373–374, and T401 each bind substrate; these read LISGG and SN. A divalent metal cation is bound at residue D402.

Belongs to the KAE1 / TsaD family. In terms of assembly, homodimer. It depends on a divalent metal cation as a cofactor. Expressed in young developing leaves, roots, flowers and siliques.

The protein resides in the mitochondrion inner membrane. The catalysed reaction is L-threonylcarbamoyladenylate + adenosine(37) in tRNA = N(6)-L-threonylcarbamoyladenosine(37) in tRNA + AMP + H(+). Required for the formation of a threonylcarbamoyl group on adenosine at position 37 (t(6)A37) in mitochondrial tRNAs that read codons beginning with adenine. Probably involved in the transfer of the threonylcarbamoyl moiety of threonylcarbamoyl-AMP (TC-AMP) to the N6 group of A37. Involved in mitochondrial genome maintenance. May have a role in embryonic development in plants. This chain is Probable tRNA N6-adenosine threonylcarbamoyltransferase, mitochondrial, found in Arabidopsis thaliana (Mouse-ear cress).